Consider the following 265-residue polypeptide: Expansin-like A1 (265 aa).

The signal sequence occupies residues 1 to 20 (MGSFLFLIVVIFLFSSSVNA). The Expansin-like EG45 domain maps to 41–147 (SGACAYGSMA…QRVPCDYGNK (107 aa)). Residues 42–62 (GACAYGSMATSFFAGHIAAAI) traverse the membrane as a helical segment. Residues asparagine 99 and asparagine 102 are each glycosylated (N-linked (GlcNAc...) asparagine). Residues 161-244 (NYLEIKLLYQ…NWEAGKIYDA (84 aa)) form the Expansin-like CBD domain.

Belongs to the expansin family. Expansin-like A subfamily.

The protein localises to the membrane. In Arabidopsis thaliana (Mouse-ear cress), this protein is Expansin-like A1 (EXLA1).